The chain runs to 123 residues: Large ribosomal subunit protein uL29 (123 aa).

Lys19 is subject to N6-acetyllysine. Lys25 is covalently cross-linked (Glycyl lysine isopeptide (Lys-Gly) (interchain with G-Cter in SUMO2)). Ser29 bears the Phosphoserine mark. Lys43 is modified (N6-acetyllysine). Residues 85–123 (PKKTRAMRRRLNKHEESLKTKKQQRKERLYPLRKYAVKA) form a disordered region. The segment covering 86 to 96 (KKTRAMRRRLN) has biased composition (basic residues).

Belongs to the universal ribosomal protein uL29 family. Component of the large ribosomal subunit.

Its subcellular location is the cytoplasm. In terms of biological role, component of the large ribosomal subunit. The ribosome is a large ribonucleoprotein complex responsible for the synthesis of proteins in the cell. This is Large ribosomal subunit protein uL29 (RPL35) from Oryctolagus cuniculus (Rabbit).